Reading from the N-terminus, the 210-residue chain is MKNPVETAMNLVPMVVEQTNRGERAYDIFSRLLKERIIFITGPVEDGMATLVCAQLLFLEAENPKKEIALYINSPGGVVTSGMAIYDTMQFIQPPVSTLCIGQAASMGSLLLCAGHKDMRFATPNARVMVHQPSGGFQGQASDIERHAQDIIKLKRRLNEIYVKHTGQDYDTIERTLDRDHFMTADEAQAFGLVDRVISEREAIEAPRTS.

Catalysis depends on S106, which acts as the Nucleophile. H131 is an active-site residue.

Belongs to the peptidase S14 family. In terms of assembly, fourteen ClpP subunits assemble into 2 heptameric rings which stack back to back to give a disk-like structure with a central cavity, resembling the structure of eukaryotic proteasomes.

It is found in the cytoplasm. The catalysed reaction is Hydrolysis of proteins to small peptides in the presence of ATP and magnesium. alpha-casein is the usual test substrate. In the absence of ATP, only oligopeptides shorter than five residues are hydrolyzed (such as succinyl-Leu-Tyr-|-NHMec, and Leu-Tyr-Leu-|-Tyr-Trp, in which cleavage of the -Tyr-|-Leu- and -Tyr-|-Trp bonds also occurs).. Functionally, cleaves peptides in various proteins in a process that requires ATP hydrolysis. Has a chymotrypsin-like activity. Plays a major role in the degradation of misfolded proteins. This is ATP-dependent Clp protease proteolytic subunit 1 from Chelativorans sp. (strain BNC1).